The sequence spans 85 residues: Small proline-rich protein 2D (85 aa).

Residues 1–11 (MSYQQQQCKQP) show a composition bias toward low complexity. A disordered region spans residues 1 to 20 (MSYQQQQCKQPCQPPPVCPP). 4 repeat units span residues 21–29 (KKCPEPCPP), 30–38 (LKCPEPCPP), 39–47 (PKCPEPCPP), and 48–56 (PKCPEPCPE). The interval 21-56 (KKCPEPCPPLKCPEPCPPPKCPEPCPPPKCPEPCPE) is 4 X 9 AA approximate tandem repeats. The disordered stretch occupies residues 57 to 85 (PCPPPSCQQKCPPAQPPPPCQQKCPPKSK).

It belongs to the cornifin (SPRR) family. Expressed in uterus.

The protein localises to the cytoplasm. Its function is as follows. Cross-linked envelope protein of keratinocytes. It is a keratinocyte protein that first appears in the cell cytosol, but ultimately becomes cross-linked to membrane proteins by transglutaminase. All that results in the formation of an insoluble envelope beneath the plasma membrane. This Mus musculus (Mouse) protein is Small proline-rich protein 2D (Sprr2d).